The primary structure comprises 626 residues: Threonine--tRNA ligase (626 aa).

The editing domain stretch occupies residues 1–144 (MRMLLIHADY…LSRTIVPEEG (144 aa)). A catalytic region spans residues 207-506 (PHVRLMLEHE…QAQGKKPMFP (300 aa)). Residues Cys299, His351, and His475 each coordinate Zn(2+).

The protein belongs to the class-II aminoacyl-tRNA synthetase family. Homodimer. It depends on Zn(2+) as a cofactor.

It is found in the cytoplasm. The catalysed reaction is tRNA(Thr) + L-threonine + ATP = L-threonyl-tRNA(Thr) + AMP + diphosphate + H(+). Its function is as follows. Catalyzes the attachment of threonine to tRNA(Thr) in a two-step reaction: L-threonine is first activated by ATP to form Thr-AMP and then transferred to the acceptor end of tRNA(Thr). Also edits incorrectly charged L-seryl-tRNA(Thr). This Thermococcus gammatolerans (strain DSM 15229 / JCM 11827 / EJ3) protein is Threonine--tRNA ligase.